The primary structure comprises 356 residues: Outer spore wall protein LDS2 (356 aa).

Residues 1–92 (MSTRPQPDWY…ISESVGNSDY (92 aa)) are Cytoplasmic-facing. A helical transmembrane segment spans residues 93–113 (LHLFFLIFGYYLLNLLLIVAF). Residues 114–115 (TS) lie on the Extracellular side of the membrane. Residues 116–136 (ILAWSLLVCIYLPFLGLFALP) traverse the membrane as a helical segment. The Cytoplasmic portion of the chain corresponds to 137–213 (LAYMQTILIS…KRFYLVSLPQ (77 aa)). A helical membrane pass occupies residues 214 to 234 (FFIFFFWYIFIAFMFLLLLLV). Over 235–294 (PIVGPITINMLPFSPGMGFYYFEPYFVDVLHLDSRKLSKVYYKGFAKWLLYSISSGLLES) the chain is Extracellular. The chain crosses the membrane as a helical span at residues 295–315 (IPILGGLFIGTNAVGASLWIV). The Cytoplasmic portion of the chain corresponds to 316–356 (KEIKDRDQPAVPPSPPAEPEEPTVGSYAPPIQQSIAHINPP). The segment at 322–356 (DQPAVPPSPPAEPEEPTVGSYAPPIQQSIAHINPP) is disordered. The segment covering 346-356 (IQQSIAHINPP) has biased composition (polar residues).

It belongs to the LDS family.

The protein localises to the prospore membrane. It is found in the lipid droplet. The protein resides in the spore wall. In terms of biological role, involved in spore wall assembly. The protein is Outer spore wall protein LDS2 of Saccharomyces cerevisiae (strain ATCC 204508 / S288c) (Baker's yeast).